A 351-amino-acid polypeptide reads, in one-letter code: Heat-inducible transcription repressor HrcA (351 aa).

It belongs to the HrcA family.

Its function is as follows. Negative regulator of class I heat shock genes (grpE-dnaK-dnaJ and groELS operons). Prevents heat-shock induction of these operons. This Mycoplasma pneumoniae (strain ATCC 29342 / M129 / Subtype 1) (Mycoplasmoides pneumoniae) protein is Heat-inducible transcription repressor HrcA.